Consider the following 275-residue polypeptide: Putative methylglyoxal reductase DkgA (275 aa).

Tyr-51 acts as the Proton donor in catalysis. His-107 contributes to the substrate binding site. Residue 187-241 (SPLAQGGEGVFDQKVIRELADKYGKTPAQIVIRWHLDCGLVVIPKSVTPSRIAEN) participates in NADP(+) binding.

This sequence belongs to the aldo/keto reductase family. Monomer.

It localises to the cytoplasm. It carries out the reaction hydroxyacetone + NADP(+) = methylglyoxal + NADPH + H(+). Its function is as follows. Aldo-keto reductase that significantly contributes to cellular methylglyoxal detoxification by catalyzing the NADPH-dependent conversion of methylglyoxal to acetol. The sequence is that of Putative methylglyoxal reductase DkgA from Salmonella typhi.